A 150-amino-acid chain; its full sequence is Large ribosomal subunit protein bL9 (150 aa).

It belongs to the bacterial ribosomal protein bL9 family.

Functionally, binds to the 23S rRNA. The chain is Large ribosomal subunit protein bL9 from Acidovorax ebreus (strain TPSY) (Diaphorobacter sp. (strain TPSY)).